Consider the following 309-residue polypeptide: Transaldolase (309 aa).

Residue lysine 125 is the Schiff-base intermediate with substrate of the active site.

Belongs to the transaldolase family. Type 1 subfamily. Homodimer.

The protein localises to the cytoplasm. It carries out the reaction D-sedoheptulose 7-phosphate + D-glyceraldehyde 3-phosphate = D-erythrose 4-phosphate + beta-D-fructose 6-phosphate. It participates in carbohydrate degradation; pentose phosphate pathway; D-glyceraldehyde 3-phosphate and beta-D-fructose 6-phosphate from D-ribose 5-phosphate and D-xylulose 5-phosphate (non-oxidative stage): step 2/3. In terms of biological role, transaldolase is important for the balance of metabolites in the pentose-phosphate pathway. The sequence is that of Transaldolase from Pseudomonas syringae pv. tomato (strain ATCC BAA-871 / DC3000).